The chain runs to 500 residues: Formate-nitrite transporter 3 (500 aa).

Over 1-31 the chain is Cytoplasmic; that stretch reads MVLAASPEAYRKVIEYGIKKTKLRIDRLFLQ. The chain crosses the membrane as a helical span at residues 32-52; the sequence is AIMAGIYVGMAGHACTALAGA. Residues 53–69 are Extracellular-facing; it reads YSTDPANPLAVSKATQK. The helical transmembrane segment at 70-90 threads the bilayer; the sequence is FLYASLFPVAFIAIIFTGAEL. Topologically, residues 91-113 are cytoplasmic; that stretch reads FTGNTMTMLVCLLERRVTALQLC. The chain crosses the membrane as a helical span at residues 114-134; it reads INWICSLVGNWAGALFAAYFL. Residues 135 to 164 lie on the Extracellular side of the membrane; the sequence is SYLPGVLQDPDHLHYLEDVAAHKTELSFLQ. The helical transmembrane segment at 165 to 185 threads the bilayer; sequence CFCLAVGCNTFVCLAVWFVIA. At 186 to 192 the chain is on the cytoplasmic side; it reads SDDAAGK. A helical membrane pass occupies residues 193-213; it reads IMSMWFPIVSFCVAGYEHIIA. Topologically, residues 214-237 are extracellular; that stretch reads NFYTLQCALMHGVGPGVGTVILKN. The helical transmembrane segment at 238–258 threads the bilayer; it reads FIPTLLGNIVGGCGLVGAVYW. The Cytoplasmic portion of the chain corresponds to 259–500; that stretch reads YNFYPTVCVV…ALEEHPASTI (242 aa). The disordered stretch occupies residues 411 to 500; sequence PLRENSGVPS…ALEEHPASTI (90 aa). Composition is skewed to basic and acidic residues over residues 428-444 and 466-485; these read GRVR…RGGE and FHPH…ETRV.

The protein belongs to the FNT transporter (TC 1.A.16) family. Homopentamer.

It is found in the cell membrane. It carries out the reaction (S)-lactate(in) + H(+)(in) = (S)-lactate(out) + H(+)(out). The catalysed reaction is formate(in) + H(+)(in) = formate(out) + H(+)(out). The enzyme catalyses pyruvate(out) + H(+)(out) = pyruvate(in) + H(+)(in). It catalyses the reaction acetate(out) + H(+)(out) = acetate(in) + H(+)(in). Its activity is regulated as follows. Inhibited by p-chloromercuribenzene sulfonate (pCMBS). Methyl methanethiosulfonate (MMTS) inhibits L-lactate but not formate transport. Inhibited by the Malaria Box compound MMV007839. Inhibited by BH-296, BH-317, BH-326 and BH-388 compounds. In terms of biological role, monocarboxylate-proton symporter; active in acidic-to-neutral pH range. Transports L-lactate and formate. The polypeptide is Formate-nitrite transporter 3 (Toxoplasma gondii (strain ATCC 50611 / Me49)).